Consider the following 470-residue polypeptide: FAD-dependent monooxygenase nvfK (470 aa).

The N-terminal stretch at 1–23 (MEKAKFKVVIVGGSITGLTLAHC) is a signal peptide. Residues Glu-35, Gly-49, and Arg-108 each coordinate FAD. N-linked (GlcNAc...) asparagine glycosylation is present at Asn-121. Tyr-216 is an active-site residue. FAD is bound by residues Asp-308 and Ala-321. A helical membrane pass occupies residues 450–470 (ILMSIVLVAPAWVYIFSSLVW).

This sequence belongs to the paxM FAD-dependent monooxygenase family. The cofactor is FAD.

It is found in the membrane. The enzyme catalyses (3R)-3-farnesyl-6-hydroxy-2,3,5-trimethyl-4-oxocyclohexa-1,5-diene-1-carboxylate + 2-oxoglutarate + O2 = (3R)-[(10S)-11-epoxyfarnesyl]-2,3,5-trimethyl-6-oxido-4-oxocyclohexa-1,5-diene-1-carboxylate + succinate + CO2. It participates in secondary metabolite biosynthesis; terpenoid biosynthesis. In terms of biological role, FAD-dependent monooxygenase; part of the gene cluster that mediates the biosynthesis of novofumigatonin, a heavily oxygenated meroterpenoid containing a unique orthoester moiety. The first step of the pathway is the synthesis of 3,5-dimethylorsellinic acid (DMOA) by the polyketide synthase nvfA via condensation of one acetyl-CoA starter unit with 3 malonyl-CoA units and 2 methylations. DMOA is then converted to farnesyl-DMOA by the farnesyltransferase nvfB. Epoxydation by FAD-dependent monooxygenase nvfK, followed by a protonation-initiated cyclization catalyzed by the terpene cyclase nvfL leads to the production of asnavolin H. The short chain dehydrogenase nvfC then as a 3-OH dehydrogenase of asnovolin H to yield chemesin D. There are two branches to synthesize asnovolin A from chemesin D. In one branch, chemesin D undergoes Baeyer-Villiger oxidation by nvfH, methylation by nvfJ, and enoyl reduction by the nvfM D enoylreductase that reduces the double bond between C-5'and C-6', to form respectively asnovolin I, asnovolin K, and asnovolin A. In the other branch, the methylation precedes the Baeyer-Villiger oxidation and the enoyl reduction to yield asnovolin A via the asnovolin J intermediate. Asnovolin A is further converted to fumigatonoid A by the Fe(II)/2-oxoglutarate-dependent dioxygenase nvfI that catalyzes an endoperoxidation reaction. The alpha/beta hydrolase nvfD then acts as an epimerase that converts fumigatonoid A to its C-5' epimer, which then undergoes spontaneous or nvfD-catalyzed lactonization. The following step utilizes the ketoreductase nvfG to produce fumigatonoid B. The dioxygenase nvfE further converts fumigatonoid B into fumigatonoid C. Finally the Fe(II)/2-oxoglutarate-dependent dioxygenase nvfF catalyzes two rounds of oxidation to transform fumigatonoid C into the end product, novofumigatonin A. The polypeptide is FAD-dependent monooxygenase nvfK (Aspergillus novofumigatus (strain IBT 16806)).